The chain runs to 131 residues: Small ribosomal subunit protein bS6 (131 aa).

A disordered region spans residues 96–131 (VTEASPMVKAKDERRERRDDFANETADDAEAGDSEE). The segment covering 104-116 (KAKDERRERRDDF) has biased composition (basic and acidic residues). Positions 120–131 (TADDAEAGDSEE) are enriched in acidic residues.

This sequence belongs to the bacterial ribosomal protein bS6 family.

Its function is as follows. Binds together with bS18 to 16S ribosomal RNA. The protein is Small ribosomal subunit protein bS6 of Salmonella arizonae (strain ATCC BAA-731 / CDC346-86 / RSK2980).